Consider the following 147-residue polypeptide: Ubiquitin-conjugating enzyme E2-16 kDa (147 aa).

Residues 1–147 (MAFKRINKEL…AREWTRKYAI (147 aa)) form the UBC core domain. Cys-107 acts as the Glycyl thioester intermediate in catalysis.

It belongs to the ubiquitin-conjugating enzyme family.

The enzyme catalyses S-ubiquitinyl-[E1 ubiquitin-activating enzyme]-L-cysteine + [E2 ubiquitin-conjugating enzyme]-L-cysteine = [E1 ubiquitin-activating enzyme]-L-cysteine + S-ubiquitinyl-[E2 ubiquitin-conjugating enzyme]-L-cysteine.. It participates in protein modification; protein ubiquitination. Catalyzes the covalent attachment of ubiquitin to other proteins. May also mediate selective proteolysis pathways. This Colletotrichum gloeosporioides (Anthracnose fungus) protein is Ubiquitin-conjugating enzyme E2-16 kDa (UBC1).